We begin with the raw amino-acid sequence, 255 residues long: MTMPYYASAEQIMRDRSELARKGIARGRSVVVLTYRDGVLFVAENPSRALHKVSELYDRLGFAAVGKYNEFENLRRAGIVHADMRGYSYDRRDVTGRSLANAYAQTLGTIFTEQPKPYEVEICVAEIGRFGSSTPAQLYRITYDGSIADEQEFVVMGGTTEPIVTAMRESYQRDLDLESAVRLAVGALQKGGPAPAGTTEAEPRTLDVSALEVAVLDSNRPRRAFKRIAGSSLEEMLPTPAATEDAPPANGDAPS.

A disordered region spans residues 229-255 (AGSSLEEMLPTPAATEDAPPANGDAPS). Low complexity predominate over residues 238–249 (PTPAATEDAPPA).

It belongs to the peptidase T1A family. The 20S proteasome core is composed of 14 alpha and 14 beta subunits that assemble into four stacked heptameric rings, resulting in a barrel-shaped structure. The two inner rings, each composed of seven catalytic beta subunits, are sandwiched by two outer rings, each composed of seven alpha subunits. All four combinations of alpha- and beta-subunits (beta2-alpha1, beta2-alpha2, beta1-alpha2 and beta1-alpha1) yield fully assembled and proteolytically active proteasomes. The catalytic chamber with the active sites is on the inside of the barrel. Has probably a gated structure, the ends of the cylinder being occluded by the N-termini of the alpha-subunits. Is likely capped by the proteasome-associated ATPase, ARC. The N-terminus is blocked.

The protein resides in the cytoplasm. Its pathway is protein degradation; proteasomal Pup-dependent pathway. Its activity is regulated as follows. The formation of the proteasomal ATPase ARC-20S proteasome complex, likely via the docking of the C-termini of ARC into the intersubunit pockets in the alpha-rings, may trigger opening of the gate for substrate entry. Interconversion between the open-gate and close-gate conformations leads to a dynamic regulation of the 20S proteasome proteolysis activity. Functionally, component of the proteasome core, a large protease complex with broad specificity involved in protein degradation. The R.erythropolis proteasomes are able to cleave oligopeptides after Tyr, Phe and Leu, very poorly after Arg but not after Glu. Thus, displays chymotrypsin-like activity, low trypsin-like activity but no caspase-like activity. In Rhodococcus erythropolis (Arthrobacter picolinophilus), this protein is Proteasome subunit alpha 2.